A 57-amino-acid chain; its full sequence is Large ribosomal subunit protein bL32 (57 aa).

The interval 1–23 is disordered; the sequence is MAVPKKKTSKSKRDKRRATWRHK.

Belongs to the bacterial ribosomal protein bL32 family.

This chain is Large ribosomal subunit protein bL32, found in Nostoc sp. (strain PCC 7120 / SAG 25.82 / UTEX 2576).